A 431-amino-acid polypeptide reads, in one-letter code: UDP-N-acetylglucosamine 1-carboxyvinyltransferase (431 aa).

Phosphoenolpyruvate is bound at residue 22 to 23 (KN). Arg-93 serves as a coordination point for UDP-N-acetyl-alpha-D-glucosamine. The Proton donor role is filled by Cys-117. Cys-117 bears the 2-(S-cysteinyl)pyruvic acid O-phosphothioketal mark. Asp-307 and Val-329 together coordinate UDP-N-acetyl-alpha-D-glucosamine.

Belongs to the EPSP synthase family. MurA subfamily.

The protein resides in the cytoplasm. It catalyses the reaction phosphoenolpyruvate + UDP-N-acetyl-alpha-D-glucosamine = UDP-N-acetyl-3-O-(1-carboxyvinyl)-alpha-D-glucosamine + phosphate. Its pathway is cell wall biogenesis; peptidoglycan biosynthesis. Cell wall formation. Adds enolpyruvyl to UDP-N-acetylglucosamine. In Nitrosococcus oceani (strain ATCC 19707 / BCRC 17464 / JCM 30415 / NCIMB 11848 / C-107), this protein is UDP-N-acetylglucosamine 1-carboxyvinyltransferase.